Reading from the N-terminus, the 486-residue chain is Malonate-semialdehyde dehydrogenase (486 aa).

NAD(+)-binding residues include Phe-154, Lys-178, Glu-181, Arg-182, and Ser-231. The Nucleophile role is filled by Cys-286. Glu-386 contacts NAD(+).

This sequence belongs to the aldehyde dehydrogenase family. IolA subfamily. Homotetramer.

The catalysed reaction is 3-oxopropanoate + NAD(+) + CoA + H2O = hydrogencarbonate + acetyl-CoA + NADH + H(+). The enzyme catalyses 2-methyl-3-oxopropanoate + NAD(+) + CoA + H2O = propanoyl-CoA + hydrogencarbonate + NADH + H(+). It functions in the pathway polyol metabolism; myo-inositol degradation into acetyl-CoA; acetyl-CoA from myo-inositol: step 7/7. Its function is as follows. Catalyzes the oxidation of malonate semialdehyde (MSA) and methylmalonate semialdehyde (MMSA) into acetyl-CoA and propanoyl-CoA, respectively. Is involved in a myo-inositol catabolic pathway. Bicarbonate, and not CO2, is the end-product of the enzymatic reaction. In Bacillus cereus (strain ATCC 10987 / NRS 248), this protein is Malonate-semialdehyde dehydrogenase.